A 350-amino-acid polypeptide reads, in one-letter code: Olfactory receptor 52I2 (350 aa).

Residues 1–55 lie on the Extracellular side of the membrane; sequence MCQQILRDCILLIHHLCINRKKVSLVMLGPAYNHTMETPASFLLVGIPGLQSSHL. The N-linked (GlcNAc...) asparagine glycan is linked to asparagine 33. Residues 56–76 traverse the membrane as a helical segment; the sequence is WLAISLSAMYIIALLGNTIIV. Residues 77-84 lie on the Cytoplasmic side of the membrane; it reads TAIWMDST. A helical transmembrane segment spans residues 85–105; that stretch reads RHEPMYCFLCVLAAVDIVMAS. Residues 106–129 lie on the Extracellular side of the membrane; sequence SVVPKMVSIFCSGDSSISFSACFT. An intrachain disulfide couples cysteine 127 to cysteine 219. Residues 130-150 form a helical membrane-spanning segment; sequence QMFFVHLATAVETGLLLTMAF. Residues 151-169 are Cytoplasmic-facing; that stretch reads DRYVAICKPLHYKRILTPQ. Residues 170-190 form a helical membrane-spanning segment; that stretch reads VMLGMSMAITIRAIIAITPLS. The Extracellular segment spans residues 191–226; sequence WMVSHLPFCGSNVVVHSYCEHIALARLACADPVPSS. Residues 227–247 form a helical membrane-spanning segment; sequence LYSLIGSSLMVGSDVAFIAAS. Residues 248–267 are Cytoplasmic-facing; that stretch reads YILILKAVFGLSSKTAQLKA. A helical membrane pass occupies residues 268-288; that stretch reads LSTCGSHVGVMALYYLPGMAS. Over 289 to 304 the chain is Extracellular; it reads IYAAWLGQDVVPLHTQ. A helical transmembrane segment spans residues 305–325; the sequence is VLLADLYVIIPATLNPIIYGM. The Cytoplasmic portion of the chain corresponds to 326-350; sequence RTKQLRERIWSYLMHVLFDHSNLGS.

This sequence belongs to the G-protein coupled receptor 1 family.

It is found in the cell membrane. Its function is as follows. Odorant receptor. This is Olfactory receptor 52I2 (OR52I2) from Homo sapiens (Human).